The primary structure comprises 423 residues: Kynureninase (423 aa).

Pyridoxal 5'-phosphate-binding positions include leucine 105, serine 106, 133-136 (FPSD), aspartate 218, histidine 221, and tyrosine 243. N6-(pyridoxal phosphate)lysine is present on lysine 244. The pyridoxal 5'-phosphate site is built by tryptophan 273 and asparagine 301.

The protein belongs to the kynureninase family. Homodimer. Pyridoxal 5'-phosphate is required as a cofactor.

It carries out the reaction L-kynurenine + H2O = anthranilate + L-alanine + H(+). The catalysed reaction is 3-hydroxy-L-kynurenine + H2O = 3-hydroxyanthranilate + L-alanine + H(+). It functions in the pathway amino-acid degradation; L-kynurenine degradation; L-alanine and anthranilate from L-kynurenine: step 1/1. Its pathway is cofactor biosynthesis; NAD(+) biosynthesis; quinolinate from L-kynurenine: step 2/3. Functionally, catalyzes the cleavage of L-kynurenine (L-Kyn) and L-3-hydroxykynurenine (L-3OHKyn) into anthranilic acid (AA) and 3-hydroxyanthranilic acid (3-OHAA), respectively. The protein is Kynureninase of Xanthomonas oryzae pv. oryzae (strain KACC10331 / KXO85).